Consider the following 154-residue polypeptide: Putative pre-16S rRNA nuclease (154 aa).

This sequence belongs to the YqgF nuclease family.

The protein localises to the cytoplasm. Functionally, could be a nuclease involved in processing of the 5'-end of pre-16S rRNA. The chain is Putative pre-16S rRNA nuclease from Ruegeria pomeroyi (strain ATCC 700808 / DSM 15171 / DSS-3) (Silicibacter pomeroyi).